Consider the following 1022-residue polypeptide: Dihydropyrimidine dehydrogenase [NADP(+)] (1022 aa).

A disordered region spans residues 26–45; that stretch reads ANVHSTASKKNEKKHWKRNP. A 4Fe-4S ferredoxin-type 1 domain is found at 69–100; the sequence is ERGALREALRCLKCADAPCQKSCPTNLDIKSF. Residues Cys79, Cys82, Cys87, and Cys91 each contribute to the [4Fe-4S] cluster site. Residue Val129 participates in FAD binding. The [4Fe-4S] cluster site is built by Cys130, Cys136, Cys140, and Gln156. Residues 194–198, 218–226, Arg235, and Leu261 contribute to the FAD site; these read GCGPA and EKQKYIGGL. Residues 340–343, 364–365, Arg371, 437–439, and 481–487 each bind NADP(+); these read AGDT, RK, AFG, and DIAGFAN. 480-489 contributes to the FAD binding site; the sequence is GDIAGFANTT. FMN-binding positions include Ser550 and 574 to 575; that span reads KT. Substrate contacts are provided by residues Asn609 and 668-670; that span reads NLS. Cys671 acts as the Proton acceptor in catalysis. Residue Lys709 participates in FMN binding. 736–737 is a substrate binding site; sequence NT. Residues Gly767, 793-795, and 816-817 contribute to the FMN site; these read TGG and CS. 2 consecutive 4Fe-4S ferredoxin-type domains span residues 943 to 975 and 976 to 1006; these read VQAL…FDPE and THLP…MVSR. Cys952, Cys955, Cys958, Cys962, Cys985, Cys988, Cys991, and Cys995 together coordinate [4Fe-4S] cluster.

Belongs to the dihydropyrimidine dehydrogenase family. In terms of assembly, homodimer. The cofactor is FAD. FMN serves as cofactor. [4Fe-4S] cluster is required as a cofactor.

It is found in the cytoplasm. The catalysed reaction is 5,6-dihydrouracil + NADP(+) = uracil + NADPH + H(+). The enzyme catalyses 5,6-dihydrothymine + NADP(+) = thymine + NADPH + H(+). It functions in the pathway amino-acid biosynthesis; beta-alanine biosynthesis. Involved in pyrimidine base degradation. Catalyzes the reduction of uracil and thymine. Also involved the degradation of the chemotherapeutic drug 5-fluorouracil. The protein is Dihydropyrimidine dehydrogenase [NADP(+)] (dpyd) of Danio rerio (Zebrafish).